The following is a 453-amino-acid chain: Insulinoma-associated protein 1b (453 aa).

Positions 1 to 20 are SNAG domain; the sequence is MPKGFLVKRNKKAALVSYRI. Positions 140 to 179 are disordered; that stretch reads NSNRSGTASGAHAPAIQTGAKRPSADAAERKVSSKSAKKP. The segment covering 162 to 171 has biased composition (basic and acidic residues); the sequence is PSADAAERKV. The segment at 252–274 adopts a C2H2-type 1 zinc-finger fold; sequence YRCPECEKVFSCPANLASHRRWH. A disordered region spans residues 298–318; sequence AEFPSDRDTPSPGLSESGSED. 3 consecutive C2H2-type zinc fingers follow at residues 321 to 343, 383 to 406, and 412 to 435; these read YDCQHCGKRFKRQAYLRKHILGH, LTCPACGEKLPNRASLERHLRLLH, and FPCKFCPATFYSSPGLTRHINKCH.

The protein belongs to the INSM1 family.

It localises to the nucleus. Its function is as follows. May act as a transcriptional regulator. May play a role in neurogenesis and neuroendocrine cell differentiation during embryonic development. The chain is Insulinoma-associated protein 1b (insm1b) from Danio rerio (Zebrafish).